The primary structure comprises 847 residues: Guanine nucleotide exchange factor VAV3 (847 aa).

In terms of domain architecture, Calponin-homology (CH) spans Met-1–Pro-119. Residue Tyr-141 is modified to Phosphotyrosine. In terms of domain architecture, DH spans Ile-192 to Val-371. One can recognise a PH domain in the interval Arg-400–Ser-502. The Phorbol-ester/DAG-type zinc-finger motif lies at Phe-513–Cys-562. The interval Asp-560–Glu-847 is sufficient for interaction with ROS1. An SH3 1 domain is found at Pro-592–Cys-660. The region spanning Trp-672–Tyr-766 is the SH2 domain. In terms of domain architecture, SH3 2 spans Lys-788–Glu-847.

As to quaternary structure, interacts with the PH domain of APS. Interacts with ROS1; constitutive interaction that mediates VAV3 phosphorylation. Interacts (via SH2 domains) with the phosphorylated form of EPHA2. In terms of processing, phosphorylated. Phosphorylation can be mediated by ROS1. In osteoclasts, undergoes tyrosine phosphorylation in response to CSF1. In terms of tissue distribution, abundantly expressed in osteoclasts and mature osteoblasts. Also expressed in bone marrow macrophages (at protein level):.

Exchange factor for GTP-binding proteins RhoA, RhoG and, to a lesser extent, Rac1. Binds physically to the nucleotide-free states of those GTPases. Plays an important role in angiogenesis. Its recruitment by phosphorylated EPHA2 is critical for EFNA1-induced RAC1 GTPase activation and vascular endothelial cell migration and assembly. May be important for integrin-mediated signaling, at least in some cell types. In osteoclasts, along with SYK tyrosine kinase, required for signaling through integrin alpha-v/beta-1 (ITAGV-ITGB1), a crucial event for osteoclast proper cytoskeleton organization and function. This signaling pathway involves RAC1, but not RHO, activation. Necessary for proper wound healing. In the course of wound healing, required for the phagocytotic cup formation preceding macrophage phagocytosis of apoptotic neutrophils. Responsible for integrin beta-2-mediated macrophage adhesion and, to a lesser extent, contributes to beta-3-mediated adhesion. Does not affect integrin beta-1-mediated adhesion. The protein is Guanine nucleotide exchange factor VAV3 (Vav3) of Mus musculus (Mouse).